The sequence spans 72 residues: Arrestin-E (72 aa).

Belongs to the arrestin family. In terms of tissue distribution, adrenal, cerebral cortex, heart, hypothalamus, intestine, liver, lung, pituitary, retina and testis.

The protein is Arrestin-E (Ear) of Rattus norvegicus (Rat).